Consider the following 371-residue polypeptide: Leu/Ile/Val-binding protein homolog 1 (371 aa).

Residues 1–23 (MRKTLFSGVALAAVIAFGGSAWA) form the signal peptide.

It belongs to the leucine-binding protein family.

Functionally, component of an amino-acid transport system. The chain is Leu/Ile/Val-binding protein homolog 1 from Brucella abortus (strain 2308).